Reading from the N-terminus, the 213-residue chain is Orotate phosphoribosyltransferase (213 aa).

A 5-phospho-alpha-D-ribose 1-diphosphate-binding site is contributed by lysine 26. 34–35 (FF) serves as a coordination point for orotate. Residues 72–73 (YK), arginine 99, lysine 100, lysine 103, histidine 105, and 124–132 (DDVITAGTA) each bind 5-phospho-alpha-D-ribose 1-diphosphate. Orotate contacts are provided by threonine 128 and arginine 156.

It belongs to the purine/pyrimidine phosphoribosyltransferase family. PyrE subfamily. Homodimer. Requires Mg(2+) as cofactor.

It carries out the reaction orotidine 5'-phosphate + diphosphate = orotate + 5-phospho-alpha-D-ribose 1-diphosphate. It participates in pyrimidine metabolism; UMP biosynthesis via de novo pathway; UMP from orotate: step 1/2. In terms of biological role, catalyzes the transfer of a ribosyl phosphate group from 5-phosphoribose 1-diphosphate to orotate, leading to the formation of orotidine monophosphate (OMP). The polypeptide is Orotate phosphoribosyltransferase (Pseudomonas putida (strain GB-1)).